The following is a 249-amino-acid chain: Ubiquinone biosynthesis O-methyltransferase (249 aa).

A disordered region spans residues 1 to 23 (MTSPSQVLPASAGKPTGPNADPK). Residues Arg52, Gly71, Asp92, and Met136 each contribute to the S-adenosyl-L-methionine site.

The protein belongs to the methyltransferase superfamily. UbiG/COQ3 family.

The enzyme catalyses a 3-demethylubiquinol + S-adenosyl-L-methionine = a ubiquinol + S-adenosyl-L-homocysteine + H(+). The catalysed reaction is a 3-(all-trans-polyprenyl)benzene-1,2-diol + S-adenosyl-L-methionine = a 2-methoxy-6-(all-trans-polyprenyl)phenol + S-adenosyl-L-homocysteine + H(+). The protein operates within cofactor biosynthesis; ubiquinone biosynthesis. In terms of biological role, O-methyltransferase that catalyzes the 2 O-methylation steps in the ubiquinone biosynthetic pathway. This chain is Ubiquinone biosynthesis O-methyltransferase, found in Cupriavidus pinatubonensis (strain JMP 134 / LMG 1197) (Cupriavidus necator (strain JMP 134)).